The following is a 558-amino-acid chain: Putative ABC transporter ATP-binding protein SAG1633 (558 aa).

2 consecutive ABC transporter domains span residues 5–246 and 295–527; these read IEWK…GIRE and LSVQ…THLK. ATP contacts are provided by residues 39–46 and 328–335; these read GPSGSGKS and GKNGAGKS.

It belongs to the ABC transporter superfamily.

It is found in the cell membrane. Its function is as follows. Probably part of an ABC transporter complex. Responsible for energy coupling to the transport system. In Streptococcus agalactiae serotype V (strain ATCC BAA-611 / 2603 V/R), this protein is Putative ABC transporter ATP-binding protein SAG1633.